A 222-amino-acid chain; its full sequence is Cytidylate kinase (222 aa).

Residue 7 to 15 (GPSASGKSS) participates in ATP binding.

Belongs to the cytidylate kinase family. Type 1 subfamily.

It localises to the cytoplasm. The catalysed reaction is CMP + ATP = CDP + ADP. It catalyses the reaction dCMP + ATP = dCDP + ADP. The protein is Cytidylate kinase of Borrelia turicatae (strain 91E135).